Reading from the N-terminus, the 89-residue chain is Small ribosomal subunit protein uS15 (89 aa).

The protein belongs to the universal ribosomal protein uS15 family. As to quaternary structure, part of the 30S ribosomal subunit. Forms a bridge to the 50S subunit in the 70S ribosome, contacting the 23S rRNA.

In terms of biological role, one of the primary rRNA binding proteins, it binds directly to 16S rRNA where it helps nucleate assembly of the platform of the 30S subunit by binding and bridging several RNA helices of the 16S rRNA. Forms an intersubunit bridge (bridge B4) with the 23S rRNA of the 50S subunit in the ribosome. This is Small ribosomal subunit protein uS15 from Paracoccus denitrificans (strain Pd 1222).